Reading from the N-terminus, the 290-residue chain is Porphobilinogen deaminase (290 aa).

Residue Cys-237 is modified to S-(dipyrrolylmethanemethyl)cysteine.

This sequence belongs to the HMBS family. Monomer. Dipyrromethane is required as a cofactor.

The enzyme catalyses 4 porphobilinogen + H2O = hydroxymethylbilane + 4 NH4(+). It participates in porphyrin-containing compound metabolism; protoporphyrin-IX biosynthesis; coproporphyrinogen-III from 5-aminolevulinate: step 2/4. Functionally, tetrapolymerization of the monopyrrole PBG into the hydroxymethylbilane pre-uroporphyrinogen in several discrete steps. In Clostridium botulinum (strain 657 / Type Ba4), this protein is Porphobilinogen deaminase.